The primary structure comprises 307 residues: Ornithine carbamoyltransferase (307 aa).

Carbamoyl phosphate is bound by residues 51 to 54 (STRT), glutamine 78, arginine 102, and 129 to 132 (HPVQ). Residues asparagine 159, aspartate 223, and 227–228 (SM) contribute to the L-ornithine site. Carbamoyl phosphate is bound by residues 263 to 264 (CL) and arginine 291.

Belongs to the aspartate/ornithine carbamoyltransferase superfamily. OTCase family.

It localises to the cytoplasm. It catalyses the reaction carbamoyl phosphate + L-ornithine = L-citrulline + phosphate + H(+). Its pathway is amino-acid biosynthesis; L-arginine biosynthesis; L-arginine from L-ornithine and carbamoyl phosphate: step 1/3. In terms of biological role, reversibly catalyzes the transfer of the carbamoyl group from carbamoyl phosphate (CP) to the N(epsilon) atom of ornithine (ORN) to produce L-citrulline. This is Ornithine carbamoyltransferase from Wolinella succinogenes (strain ATCC 29543 / DSM 1740 / CCUG 13145 / JCM 31913 / LMG 7466 / NCTC 11488 / FDC 602W) (Vibrio succinogenes).